The primary structure comprises 73 residues: Large ribosomal subunit protein bL27c (73 aa).

The protein belongs to the bacterial ribosomal protein bL27 family.

The protein localises to the plastid. It is found in the chloroplast. The protein is Large ribosomal subunit protein bL27c (rpl27) of Haptolina hirta (Plankton alga).